Consider the following 200-residue polypeptide: Peptidyl-tRNA hydrolase (200 aa).

A tRNA-binding site is contributed by tyrosine 15. The Proton acceptor role is filled by histidine 20. Residues phenylalanine 66, asparagine 68, and asparagine 114 each contribute to the tRNA site.

This sequence belongs to the PTH family. As to quaternary structure, monomer.

It is found in the cytoplasm. It carries out the reaction an N-acyl-L-alpha-aminoacyl-tRNA + H2O = an N-acyl-L-amino acid + a tRNA + H(+). Functionally, hydrolyzes ribosome-free peptidyl-tRNAs (with 1 or more amino acids incorporated), which drop off the ribosome during protein synthesis, or as a result of ribosome stalling. Catalyzes the release of premature peptidyl moieties from peptidyl-tRNA molecules trapped in stalled 50S ribosomal subunits, and thus maintains levels of free tRNAs and 50S ribosomes. This Ralstonia pickettii (strain 12J) protein is Peptidyl-tRNA hydrolase.